The sequence spans 409 residues: Argininosuccinate synthase (409 aa).

ATP is bound by residues 12 to 20 (AYSGGLDTS) and Ala-39. Tyr-90 and Ser-95 together coordinate L-citrulline. Position 120 (Gly-120) interacts with ATP. Residues Thr-122, Asn-126, and Asp-127 each contribute to the L-aspartate site. L-citrulline is bound at residue Asn-126. L-citrulline-binding residues include Arg-130, Ser-181, Ser-190, Glu-266, and Tyr-278.

It belongs to the argininosuccinate synthase family. Type 1 subfamily. As to quaternary structure, homotetramer.

Its subcellular location is the cytoplasm. The catalysed reaction is L-citrulline + L-aspartate + ATP = 2-(N(omega)-L-arginino)succinate + AMP + diphosphate + H(+). It participates in amino-acid biosynthesis; L-arginine biosynthesis; L-arginine from L-ornithine and carbamoyl phosphate: step 2/3. The polypeptide is Argininosuccinate synthase (Gluconacetobacter diazotrophicus (strain ATCC 49037 / DSM 5601 / CCUG 37298 / CIP 103539 / LMG 7603 / PAl5)).